We begin with the raw amino-acid sequence, 144 residues long: FK506-binding protein 2 (144 aa).

The first 20 residues, 1–20 (MARIIVLIVAFMALIAGVFA), serve as a signal peptide directing secretion. A PPIase FKBP-type domain is found at 48–136 (GDTVSVHYTG…IFTTELVSID (89 aa)). The Prevents secretion from ER signature appears at 141 to 144 (RDEL).

It belongs to the FKBP-type PPIase family. FKBP2 subfamily.

The protein resides in the endoplasmic reticulum. It catalyses the reaction [protein]-peptidylproline (omega=180) = [protein]-peptidylproline (omega=0). Inhibited by both FK506 and rapamycin. Functionally, PPIases accelerate the folding of proteins. It catalyzes the cis-trans isomerization of proline imidic peptide bonds in oligopeptides. This chain is FK506-binding protein 2 (FPR2), found in Yarrowia lipolytica (strain CLIB 122 / E 150) (Yeast).